A 179-amino-acid chain; its full sequence is UPF0316 protein BH0621 (179 aa).

The next 3 membrane-spanning stretches (helical) occupy residues 9–29, 41–61, and 67–87; these read ALTM…LFTV, LAAT…SLVL, and IENL…GMKV.

Belongs to the UPF0316 family.

The protein resides in the cell membrane. This is UPF0316 protein BH0621 from Halalkalibacterium halodurans (strain ATCC BAA-125 / DSM 18197 / FERM 7344 / JCM 9153 / C-125) (Bacillus halodurans).